A 395-amino-acid polypeptide reads, in one-letter code: Phosphoglycerate kinase (395 aa).

Substrate is bound by residues 21–23 (DFN), R36, 59–62 (HLGR), R120, and R153. ATP contacts are provided by residues K203, E325, and 351 to 354 (GGDS).

It belongs to the phosphoglycerate kinase family. As to quaternary structure, monomer.

The protein localises to the cytoplasm. It carries out the reaction (2R)-3-phosphoglycerate + ATP = (2R)-3-phospho-glyceroyl phosphate + ADP. The protein operates within carbohydrate degradation; glycolysis; pyruvate from D-glyceraldehyde 3-phosphate: step 2/5. The polypeptide is Phosphoglycerate kinase (Roseiflexus castenholzii (strain DSM 13941 / HLO8)).